Consider the following 480-residue polypeptide: 2-phosphoxylose phosphatase 1 (480 aa).

Residues 1–6 (MLHRNR) are Cytoplasmic-facing. A helical; Signal-anchor for type II membrane protein membrane pass occupies residues 7–27 (FLVLLALAGLLAFLSLSLQFF). At 28-480 (HLIPVSATKN…YYDACHGEGA (453 aa)) the chain is on the lumenal side. Histidine 97 acts as the Nucleophile in catalysis. N-linked (GlcNAc...) asparagine glycans are attached at residues asparagine 194, asparagine 305, and asparagine 354. Aspartate 379 functions as the Proton donor in the catalytic mechanism.

It belongs to the histidine acid phosphatase family. In terms of assembly, interacts with B3GAT3; the interaction increases the 2-phosphoxylose phosphatase activity of PXYLP1 during completion of linkage region formation in a B3GAT3-mediated manner.

The protein resides in the golgi apparatus membrane. The catalysed reaction is 3-O-[beta-D-GlcA-(1-&gt;3)-beta-D-Gal-(1-&gt;3)-beta-D-Gal-(1-&gt;4)-beta-D-2-O-P-Xyl]-L-seryl-[protein] + H2O = 3-O-(beta-D-GlcA-(1-&gt;3)-beta-D-Gal-(1-&gt;3)-beta-D-Gal-(1-&gt;4)-beta-D-Xyl)-L-seryl-[protein] + phosphate. Responsible for the 2-O-dephosphorylation of xylose in the glycosaminoglycan-protein linkage region of proteoglycans thereby regulating the amount of mature glycosaminoglycan (GAG) chains. Sulfated glycosaminoglycans (GAGs), including heparan sulfate and chondroitin sulfate, are synthesized on the so-called common GAG-protein linkage region (GlcUAbeta1-3Galbeta1-3Galbeta1-4Xylbeta1-O-Ser) of core proteins, which is formed by the stepwise addition of monosaccharide residues by the respective specific glycosyltransferases. Xylose 2-O-dephosphorylation during completion of linkage region formation is a prerequisite for the initiation and efficient elongation of the repeating disaccharide region of GAG chains. The polypeptide is 2-phosphoxylose phosphatase 1 (Mus musculus (Mouse)).